Here is a 253-residue protein sequence, read N- to C-terminus: MLTRRIIACLDVTNGRVVKGVQFLDLMDAGDPAELAARHAASGADEIVLLDITATHEGRGTLLETVRKTAQRLFIPFTVGGGIRTADDAAAVFDAGADKISINSAALTRPELIEEIGSKFGAQAVVVAIDARRNATGAEVFASGGRKPTGRDAVAWAREAEQRGAGEILLTSMDADGTRDGFDCELTAAVSSAVQIPVIASGGAGTPQHFADVFLRGKADAALAASIFHFGVADARSLKAELAAQSIPMRLPC.

Catalysis depends on residues aspartate 11 and aspartate 130.

This sequence belongs to the HisA/HisF family. As to quaternary structure, heterodimer of HisH and HisF.

Its subcellular location is the cytoplasm. It catalyses the reaction 5-[(5-phospho-1-deoxy-D-ribulos-1-ylimino)methylamino]-1-(5-phospho-beta-D-ribosyl)imidazole-4-carboxamide + L-glutamine = D-erythro-1-(imidazol-4-yl)glycerol 3-phosphate + 5-amino-1-(5-phospho-beta-D-ribosyl)imidazole-4-carboxamide + L-glutamate + H(+). The protein operates within amino-acid biosynthesis; L-histidine biosynthesis; L-histidine from 5-phospho-alpha-D-ribose 1-diphosphate: step 5/9. Its function is as follows. IGPS catalyzes the conversion of PRFAR and glutamine to IGP, AICAR and glutamate. The HisF subunit catalyzes the cyclization activity that produces IGP and AICAR from PRFAR using the ammonia provided by the HisH subunit. The protein is Imidazole glycerol phosphate synthase subunit HisF of Acidobacterium capsulatum (strain ATCC 51196 / DSM 11244 / BCRC 80197 / JCM 7670 / NBRC 15755 / NCIMB 13165 / 161).